A 469-amino-acid chain; its full sequence is 3-isopropylmalate dehydratase large subunit (469 aa).

[4Fe-4S] cluster-binding residues include C350, C410, and C413.

Belongs to the aconitase/IPM isomerase family. LeuC type 1 subfamily. As to quaternary structure, heterodimer of LeuC and LeuD. Requires [4Fe-4S] cluster as cofactor.

It carries out the reaction (2R,3S)-3-isopropylmalate = (2S)-2-isopropylmalate. The protein operates within amino-acid biosynthesis; L-leucine biosynthesis; L-leucine from 3-methyl-2-oxobutanoate: step 2/4. Catalyzes the isomerization between 2-isopropylmalate and 3-isopropylmalate, via the formation of 2-isopropylmaleate. This is 3-isopropylmalate dehydratase large subunit from Brucella abortus (strain S19).